Consider the following 258-residue polypeptide: Ribosomal RNA large subunit methyltransferase E (258 aa).

S-adenosyl-L-methionine is bound by residues Gly-58, Trp-60, Asp-78, Asp-96, and Asp-120. Lys-160 acts as the Proton acceptor in catalysis.

The protein belongs to the class I-like SAM-binding methyltransferase superfamily. RNA methyltransferase RlmE family.

It is found in the cytoplasm. The catalysed reaction is uridine(2552) in 23S rRNA + S-adenosyl-L-methionine = 2'-O-methyluridine(2552) in 23S rRNA + S-adenosyl-L-homocysteine + H(+). Specifically methylates the uridine in position 2552 of 23S rRNA at the 2'-O position of the ribose in the fully assembled 50S ribosomal subunit. In Methanococcus maripaludis (strain C5 / ATCC BAA-1333), this protein is Ribosomal RNA large subunit methyltransferase E.